A 424-amino-acid polypeptide reads, in one-letter code: Tubulin gamma chain, nucleomorph (424 aa).

Residue 137-143 (NGGTGAG) coordinates GTP.

It belongs to the tubulin family.

In terms of biological role, tubulin is the major constituent of microtubules. The gamma chain is found at microtubule organizing centers (MTOC) such as the spindle poles or the centrosome, suggesting that it is involved in the minus-end nucleation of microtubule assembly. The chain is Tubulin gamma chain, nucleomorph (tubG) from Guillardia theta (Cryptophyte).